We begin with the raw amino-acid sequence, 279 residues long: NAD kinase (279 aa).

Asp57 (proton acceptor) is an active-site residue. Residues 57–58, 133–134, Arg159, Asp161, 172–177, and Ala196 each bind NAD(+); these read DG, NE, and TAYNKS.

The protein belongs to the NAD kinase family. A divalent metal cation serves as cofactor.

Its subcellular location is the cytoplasm. It carries out the reaction NAD(+) + ATP = ADP + NADP(+) + H(+). Its function is as follows. Involved in the regulation of the intracellular balance of NAD and NADP, and is a key enzyme in the biosynthesis of NADP. Catalyzes specifically the phosphorylation on 2'-hydroxyl of the adenosine moiety of NAD to yield NADP. This Streptococcus thermophilus (strain CNRZ 1066) protein is NAD kinase.